The sequence spans 968 residues: Alanine--tRNA ligase, cytoplasmic (968 aa).

ATP contacts are provided by residues arginine 77, histidine 95, tryptophan 176, and isoleucine 214 to asparagine 216. Residues asparagine 216 and aspartate 239 each contribute to the L-alanine site. Glycine 243 lines the ATP pocket. The Zn(2+) site is built by histidine 606, histidine 610, cysteine 724, and histidine 728.

It belongs to the class-II aminoacyl-tRNA synthetase family. Monomer. It depends on Zn(2+) as a cofactor.

It localises to the cytoplasm. It carries out the reaction tRNA(Ala) + L-alanine + ATP = L-alanyl-tRNA(Ala) + AMP + diphosphate. In terms of biological role, catalyzes the attachment of alanine to tRNA(Ala) in a two-step reaction: alanine is first activated by ATP to form Ala-AMP and then transferred to the acceptor end of tRNA(Ala). Also edits incorrectly charged tRNA(Ala) via its editing domain. The polypeptide is Alanine--tRNA ligase, cytoplasmic (Caenorhabditis elegans).